A 900-amino-acid chain; its full sequence is Zinc finger protein 62 homolog (900 aa).

Residues 1–97 (MSHLKTSTED…EASEKSLHLS (97 aa)) are disordered. A Glycyl lysine isopeptide (Lys-Gly) (interchain with G-Cter in SUMO2) cross-link involves residue K5. Residues 9 to 18 (EDEEPTEEYE) show a composition bias toward acidic residues. The span at 47–73 (SKVENQQKKPVENRMKEDKSSIREAIS) shows a compositional bias: basic and acidic residues. Glycyl lysine isopeptide (Lys-Gly) (interchain with G-Cter in SUMO2) cross-links involve residues K48, K62, K65, K82, and K92. Residues 83–94 (TEQEGEASEKSL) show a composition bias toward basic and acidic residues. 13 consecutive C2H2-type zinc fingers follow at residues 225-247 (CKCD…KRIH), 253-275 (YECG…KRIH), 281-303 (YECD…KRIH), 309-331 (YECD…KSIH), 337-359 (YKCD…KVIH), 365-387 (YECD…KRIH), 393-415 (YKCD…KSIH), 421-443 (HECK…RTIH), 449-471 (YVCD…RRLH), 477-499 (YKCD…KGIH), 505-527 (YKCS…KRIH), 533-555 (FGCD…KRIH), and 561-583 (YKCE…KSVH). A Glycyl lysine isopeptide (Lys-Gly) (interchain with G-Cter in SUMO2) cross-link involves residue K587. C2H2-type zinc fingers lie at residues 589 to 611 (FKCD…KKVH), 617 to 639 (YKCD…RRVH), 645 to 667 (YECD…KRIH), 673 to 695 (YECD…KSTH), 701 to 723 (HTCD…KRVH), 729 to 751 (FKCV…KRIH), 757 to 779 (YVCD…KRIH), 785 to 807 (YECD…KSVH), 813 to 834 (YNCE…KRIH), and 840 to 862 (YRCN…KRTH). A Glycyl lysine isopeptide (Lys-Gly) (interchain with G-Cter in SUMO2) cross-link involves residue K748. K882 is covalently cross-linked (Glycyl lysine isopeptide (Lys-Gly) (interchain with G-Cter in SUMO2)).

It belongs to the krueppel C2H2-type zinc-finger protein family.

It localises to the nucleus. In terms of biological role, may play a role in differentiating skeletal muscle. This is Zinc finger protein 62 homolog (ZFP62) from Homo sapiens (Human).